The following is a 347-amino-acid chain: Transcription termination/antitermination protein NusA (347 aa).

Positions 112–184 constitute an S1 motif domain; that stretch reads GEIVAGVIQR…REPLITLSRT (73 aa). The 61-residue stretch at 287-347 folds into the KH domain; sequence ARAARVVVPD…GVSRGMAHDR (61 aa). A disordered region spans residues 322–347; that stretch reads DIRGDAPPPPPGQPEPGVSRGMAHDR.

Belongs to the NusA family. Monomer. Binds directly to the core enzyme of the DNA-dependent RNA polymerase and to nascent RNA.

It localises to the cytoplasm. Its function is as follows. Participates in both transcription termination and antitermination. The polypeptide is Transcription termination/antitermination protein NusA (Mycobacterium bovis (strain ATCC BAA-935 / AF2122/97)).